Consider the following 126-residue polypeptide: Small ribosomal subunit protein uS13 (126 aa).

The disordered stretch occupies residues 91–126; it reads HRAGLPVRGQRTRTNSRTRRSAKRTVAGKKKAPSKK. Over residues 100 to 126 the composition is skewed to basic residues; sequence QRTRTNSRTRRSAKRTVAGKKKAPSKK.

The protein belongs to the universal ribosomal protein uS13 family. In terms of assembly, part of the 30S ribosomal subunit. Forms a loose heterodimer with protein S19. Forms two bridges to the 50S subunit in the 70S ribosome.

Functionally, located at the top of the head of the 30S subunit, it contacts several helices of the 16S rRNA. In the 70S ribosome it contacts the 23S rRNA (bridge B1a) and protein L5 of the 50S subunit (bridge B1b), connecting the 2 subunits; these bridges are implicated in subunit movement. Contacts the tRNAs in the A and P-sites. This Acaryochloris marina (strain MBIC 11017) protein is Small ribosomal subunit protein uS13.